Consider the following 367-residue polypeptide: D-alanine--D-alanine ligase (367 aa).

Positions 145–351 (KRLLRDAGLP…QPALMDALIA (207 aa)) constitute an ATP-grasp domain. 174–229 (HAVGCSELFIKPANLGSSVGISKARTPQEFAAACDLALRFDGKILIERCISPVREI) is a binding site for ATP. Mg(2+) contacts are provided by Asp-306, Glu-318, and Asn-320.

Belongs to the D-alanine--D-alanine ligase family. It depends on Mg(2+) as a cofactor. Mn(2+) is required as a cofactor.

It is found in the cytoplasm. It carries out the reaction 2 D-alanine + ATP = D-alanyl-D-alanine + ADP + phosphate + H(+). The protein operates within cell wall biogenesis; peptidoglycan biosynthesis. Functionally, cell wall formation. The sequence is that of D-alanine--D-alanine ligase from Bradyrhizobium sp. (strain BTAi1 / ATCC BAA-1182).